A 566-amino-acid polypeptide reads, in one-letter code: DNA ligase B (566 aa).

The active-site N6-AMP-lysine intermediate is the lysine 125.

The protein belongs to the NAD-dependent DNA ligase family. LigB subfamily.

The catalysed reaction is NAD(+) + (deoxyribonucleotide)n-3'-hydroxyl + 5'-phospho-(deoxyribonucleotide)m = (deoxyribonucleotide)n+m + AMP + beta-nicotinamide D-nucleotide.. Its function is as follows. Catalyzes the formation of phosphodiester linkages between 5'-phosphoryl and 3'-hydroxyl groups in double-stranded DNA using NAD as a coenzyme and as the energy source for the reaction. The sequence is that of DNA ligase B from Pseudomonas putida (strain GB-1).